The chain runs to 764 residues: Serine/threonine-protein kinase MPS1 (764 aa).

Disordered regions lie at residues E66–S95, E197–D216, and Q258–I316. Low complexity predominate over residues T85–S95. Over residues E201–D216 the composition is skewed to basic and acidic residues. 2 stretches are compositionally biased toward low complexity: residues K272–S292 and S306–S315. One can recognise a Protein kinase domain in the interval Y440–M720. ATP contacts are provided by residues L446–V454 and K468. The active-site Proton acceptor is D563.

The protein belongs to the protein kinase superfamily. Ser/Thr protein kinase family. In terms of processing, autophosphorylated.

It catalyses the reaction L-seryl-[protein] + ATP = O-phospho-L-seryl-[protein] + ADP + H(+). The catalysed reaction is L-threonyl-[protein] + ATP = O-phospho-L-threonyl-[protein] + ADP + H(+). The enzyme catalyses L-tyrosyl-[protein] + ATP = O-phospho-L-tyrosyl-[protein] + ADP + H(+). In terms of biological role, involved in mitotic spindle assembly checkpoint signaling, a process that delays anaphase until chromosomes are bioriented on the spindle, and in the repair of incorrect mitotic kinetochore-spindle microtubule attachments. Phosphorylates SPC105 on MELT motifs; phosphorylation is required for recruitment of the BUB1-BUB3 complex to kinetochores. Phosphorylates CNN1, which contributes to the enrichment of CNN1 on anaphase kinetochores. Implicated in spindle pole body (SPD) duplication. Phosphorylates the SPC29 and SPC110 spindle pole body components. The sequence is that of Serine/threonine-protein kinase MPS1 (MPS1) from Saccharomyces cerevisiae (strain ATCC 204508 / S288c) (Baker's yeast).